Here is a 338-residue protein sequence, read N- to C-terminus: DNA-directed RNA polymerase subunit alpha (338 aa).

An alpha N-terminal domain (alpha-NTD) region spans residues 1 to 234; it reads MIHKNWAELI…DQLSIFVNFE (234 aa). The tract at residues 250–338 is alpha C-terminal domain (alpha-CTD); it reads FNPLLLKKVD…DLAKRFEDQF (89 aa).

The protein belongs to the RNA polymerase alpha chain family. As to quaternary structure, homodimer. The RNAP catalytic core consists of 2 alpha, 1 beta, 1 beta' and 1 omega subunit. When a sigma factor is associated with the core the holoenzyme is formed, which can initiate transcription.

It carries out the reaction RNA(n) + a ribonucleoside 5'-triphosphate = RNA(n+1) + diphosphate. DNA-dependent RNA polymerase catalyzes the transcription of DNA into RNA using the four ribonucleoside triphosphates as substrates. In Cereibacter sphaeroides (strain ATCC 17025 / ATH 2.4.3) (Rhodobacter sphaeroides), this protein is DNA-directed RNA polymerase subunit alpha.